The sequence spans 130 residues: Protein CPn_0713/CP_0033/CPj0713/CpB0740 (130 aa).

Belongs to the chlamydial CPn_0713/CT_663/TC_0034 family.

The protein is Protein CPn_0713/CP_0033/CPj0713/CpB0740 of Chlamydia pneumoniae (Chlamydophila pneumoniae).